Consider the following 150-residue polypeptide: Cell division protein SepF (150 aa).

This sequence belongs to the SepF family. In terms of assembly, homodimer. Interacts with FtsZ.

It localises to the cytoplasm. Its function is as follows. Cell division protein that is part of the divisome complex and is recruited early to the Z-ring. Probably stimulates Z-ring formation, perhaps through the cross-linking of FtsZ protofilaments. Its function overlaps with FtsA. This chain is Cell division protein SepF, found in Clostridium botulinum (strain Kyoto / Type A2).